The sequence spans 157 residues: MRIGHGYDVHCLVEGRKLILGGVDVPYERGLLGHSDADVLLHAIADAILGALALGDIGKHFPDTDPQFKGADSRKLLRHVMALAGQKGYVLGNVDATIVAQRPKLAPFIPEMRANLAEDLIAEIDRINVKATTTEQLGFAGRGEGIAAYAVVLMERR.

Residues D8 and H10 each coordinate a divalent metal cation. 4-CDP-2-C-methyl-D-erythritol 2-phosphate contacts are provided by residues 8 to 10 and 34 to 35; these read DVH and HS. A divalent metal cation is bound at residue H42. 4-CDP-2-C-methyl-D-erythritol 2-phosphate contacts are provided by residues 56–58, 61–65, 132–135, F139, and R142; these read DIG, FPDTD, and TTTE.

Belongs to the IspF family. Homotrimer. A divalent metal cation serves as cofactor.

The catalysed reaction is 4-CDP-2-C-methyl-D-erythritol 2-phosphate = 2-C-methyl-D-erythritol 2,4-cyclic diphosphate + CMP. It participates in isoprenoid biosynthesis; isopentenyl diphosphate biosynthesis via DXP pathway; isopentenyl diphosphate from 1-deoxy-D-xylulose 5-phosphate: step 4/6. In terms of biological role, involved in the biosynthesis of isopentenyl diphosphate (IPP) and dimethylallyl diphosphate (DMAPP), two major building blocks of isoprenoid compounds. Catalyzes the conversion of 4-diphosphocytidyl-2-C-methyl-D-erythritol 2-phosphate (CDP-ME2P) to 2-C-methyl-D-erythritol 2,4-cyclodiphosphate (ME-CPP) with a corresponding release of cytidine 5-monophosphate (CMP). This Geobacter metallireducens (strain ATCC 53774 / DSM 7210 / GS-15) protein is 2-C-methyl-D-erythritol 2,4-cyclodiphosphate synthase.